We begin with the raw amino-acid sequence, 75 residues long: Protein TM_1420 (75 aa).

Residues cysteine 6, cysteine 11, cysteine 39, and cysteine 43 each coordinate [2Fe-2S] cluster.

Requires [2Fe-2S] cluster as cofactor.

In terms of biological role, might be part of a multi-protein complex, possibly involved in metal cluster assembly. In Thermotoga maritima (strain ATCC 43589 / DSM 3109 / JCM 10099 / NBRC 100826 / MSB8), this protein is Protein TM_1420.